The primary structure comprises 539 residues: Phosphoenolpyruvate carboxykinase (ATP) (539 aa).

The substrate site is built by Arg-64, Tyr-206, and Lys-212. ATP contacts are provided by residues Lys-212, His-231, and 247–255 (GLSGTGKTT). Mn(2+)-binding residues include Lys-212 and His-231. Asp-268 contributes to the Mn(2+) binding site. ATP-binding positions include Glu-296, Arg-332, 448–449 (RI), and Thr-454. Arg-332 contacts substrate.

The protein belongs to the phosphoenolpyruvate carboxykinase (ATP) family. In terms of assembly, monomer. It depends on Mn(2+) as a cofactor.

The protein resides in the cytoplasm. The catalysed reaction is oxaloacetate + ATP = phosphoenolpyruvate + ADP + CO2. The protein operates within carbohydrate biosynthesis; gluconeogenesis. In terms of biological role, involved in the gluconeogenesis. Catalyzes the conversion of oxaloacetate (OAA) to phosphoenolpyruvate (PEP) through direct phosphoryl transfer between the nucleoside triphosphate and OAA. The polypeptide is Phosphoenolpyruvate carboxykinase (ATP) (Yersinia pestis bv. Antiqua (strain Antiqua)).